We begin with the raw amino-acid sequence, 448 residues long: MAFDAAMSTHEDLLATIRYVRDRTGDPNAWQTGLTPTEVTAVVTSTTRSEQLDAILRKIRQRHSNLYYPAPPDREQGDAARAIADAEAALAHQNSATAQLDLQVVSAILNAHLKTVEGGESLHELQQEIEAAVRIRSDLDTPAGARDFQRFLIGKLKDIREVVATASLDAASKSALMAAWTSLYDASKGDRGDADDRGPASVGSGGAPARGAGQQPELPTRAEPDCLLDSLLLEDPGLLADDLQVPGGTSAAIPSASSTPSLPNLGGATMPGGGATPALVPGVSAPGGLPLSGLLRGVGDEPELTDFDERGQEVRDPADYEHSNEPDERRADDREGADEDAGLGKSESPPQAPTTVTLPNGETVTAASPQLAAAIKAAASGTPIADAFQQQGIAIPLPGTAVANPVDPARISAGDVGVFTATPLPLALAKLFWTARFNTSQPCEGQTF.

Over residues 187 to 198 (SKGDRGDADDRG) the composition is skewed to basic and acidic residues. Disordered stretches follow at residues 187–221 (SKGD…LPTR), 243–270 (LQVP…GATM), and 291–361 (LSGL…LPNG). The span at 243–261 (LQVPGGTSAAIPSASSTPS) shows a compositional bias: low complexity. The segment covering 307–334 (FDERGQEVRDPADYEHSNEPDERRADDR) has biased composition (basic and acidic residues).

To M.tuberculosis Rv0025 and Rv0739.

This is an uncharacterized protein from Mycobacterium tuberculosis (strain ATCC 25618 / H37Rv).